Here is a 167-residue protein sequence, read N- to C-terminus: Interferon gamma (167 aa).

An N-terminal signal peptide occupies residues 1 to 23; the sequence is MNYTSFIFAFQLCIILCSSGYYC. Gln24 carries the pyrrolidone carboxylic acid modification. N-linked (GlcNAc...) asparagine glycosylation is found at Asn39 and Asn107.

This sequence belongs to the type II (or gamma) interferon family. In terms of assembly, homodimer. Interacts with IFNGR1 (via extracellular domain); this interaction promotes IFNGR1 dimerization. In terms of tissue distribution, released primarily from activated T lymphocytes.

The protein resides in the secreted. Its function is as follows. Type II interferon produced by immune cells such as T-cells and NK cells that plays crucial roles in antimicrobial, antiviral, and antitumor responses by activating effector immune cells and enhancing antigen presentation. Primarily signals through the JAK-STAT pathway after interaction with its receptor IFNGR1 to affect gene regulation. Upon IFNG binding, IFNGR1 intracellular domain opens out to allow association of downstream signaling components JAK2, JAK1 and STAT1, leading to STAT1 activation, nuclear translocation and transcription of IFNG-regulated genes. Many of the induced genes are transcription factors such as IRF1 that are able to further drive regulation of a next wave of transcription. Plays a role in class I antigen presentation pathway by inducing a replacement of catalytic proteasome subunits with immunoproteasome subunits. In turn, increases the quantity, quality, and repertoire of peptides for class I MHC loading. Increases the efficiency of peptide generation also by inducing the expression of activator PA28 that associates with the proteasome and alters its proteolytic cleavage preference. Up-regulates as well MHC II complexes on the cell surface by promoting expression of several key molecules such as cathepsins B/CTSB, H/CTSH, and L/CTSL. Participates in the regulation of hematopoietic stem cells during development and under homeostatic conditions by affecting their development, quiescence, and differentiation. In Felis catus (Cat), this protein is Interferon gamma (IFNG).